The following is a 464-amino-acid chain: Argininosuccinate lyase (464 aa).

The protein belongs to the lyase 1 family. Argininosuccinate lyase subfamily.

The protein resides in the cytoplasm. It carries out the reaction 2-(N(omega)-L-arginino)succinate = fumarate + L-arginine. Its pathway is amino-acid biosynthesis; L-arginine biosynthesis; L-arginine from L-ornithine and carbamoyl phosphate: step 3/3. The protein is Argininosuccinate lyase of Pseudomonas syringae pv. tomato (strain ATCC BAA-871 / DC3000).